Here is a 530-residue protein sequence, read N- to C-terminus: Glucose-6-phosphate isomerase (530 aa).

Catalysis depends on Glu-322, which acts as the Proton donor. Active-site residues include His-351 and Lys-455.

Belongs to the GPI family.

Its subcellular location is the cytoplasm. The enzyme catalyses alpha-D-glucose 6-phosphate = beta-D-fructose 6-phosphate. The protein operates within carbohydrate biosynthesis; gluconeogenesis. It participates in carbohydrate degradation; glycolysis; D-glyceraldehyde 3-phosphate and glycerone phosphate from D-glucose: step 2/4. Its function is as follows. Catalyzes the reversible isomerization of glucose-6-phosphate to fructose-6-phosphate. The chain is Glucose-6-phosphate isomerase from Citrifermentans bemidjiense (strain ATCC BAA-1014 / DSM 16622 / JCM 12645 / Bem) (Geobacter bemidjiensis).